A 703-amino-acid chain; its full sequence is Prolyl 3-hydroxylase 2 (703 aa).

A signal peptide spans 1–21 (MRESTWVSLLLLLLLPAPQRG). The segment at 18 to 40 (PQRGGPQDGRGSPEPEPERGPLQ) is disordered. TPR repeat units follow at residues 42–75 (FDLL…HRRL), 144–177 (RVPY…NPEH), 205–238 (HLES…YFNE), and 301–334 (PLHY…HPDD). Residues Asn-444, Asn-455, and Asn-544 are each glycosylated (N-linked (GlcNAc...) asparagine). The Fe2OG dioxygenase domain occupies 552–666 (THMVCRTALS…RCAVALWFTL (115 aa)). Fe cation contacts are provided by His-575, Asp-577, and His-647. Arg-657 is an active-site residue. The Prevents secretion from ER signature appears at 700 to 703 (KDEL).

Belongs to the leprecan family. Requires Fe cation as cofactor. It depends on L-ascorbate as a cofactor. As to expression, detected at low levels in cartilage.

It localises to the endoplasmic reticulum. It is found in the sarcoplasmic reticulum. The protein localises to the golgi apparatus. It carries out the reaction L-prolyl-[collagen] + 2-oxoglutarate + O2 = trans-3-hydroxy-L-prolyl-[collagen] + succinate + CO2. Functionally, prolyl 3-hydroxylase that catalyzes the post-translational formation of 3-hydroxyproline on collagens. Contributes to proline 3-hydroxylation of collagen COL4A1 and COL1A1 in tendons, the eye sclera and in the eye lens capsule. Has high activity with the type IV collagen COL4A1, and lower activity with COL1A1. Catalyzes hydroxylation of the first Pro in Gly-Pro-Hyp sequences where Hyp is 4-hydroxyproline. Has no activity on substrates that lack 4-hydroxyproline in the third position. This is Prolyl 3-hydroxylase 2 from Rattus norvegicus (Rat).